The primary structure comprises 269 residues: 3-methyl-2-oxobutanoate hydroxymethyltransferase (269 aa).

The Mg(2+) site is built by Asp-50 and Asp-89. Residues 50 to 51, Asp-89, and Lys-118 contribute to the 3-methyl-2-oxobutanoate site; that span reads DS. Glu-120 is a binding site for Mg(2+). Glu-187 serves as the catalytic Proton acceptor.

Belongs to the PanB family. As to quaternary structure, homodecamer; pentamer of dimers. Mg(2+) is required as a cofactor.

The protein resides in the cytoplasm. It catalyses the reaction 3-methyl-2-oxobutanoate + (6R)-5,10-methylene-5,6,7,8-tetrahydrofolate + H2O = 2-dehydropantoate + (6S)-5,6,7,8-tetrahydrofolate. It functions in the pathway cofactor biosynthesis; (R)-pantothenate biosynthesis; (R)-pantoate from 3-methyl-2-oxobutanoate: step 1/2. Functionally, catalyzes the reversible reaction in which hydroxymethyl group from 5,10-methylenetetrahydrofolate is transferred onto alpha-ketoisovalerate to form ketopantoate. In Nitrosomonas europaea (strain ATCC 19718 / CIP 103999 / KCTC 2705 / NBRC 14298), this protein is 3-methyl-2-oxobutanoate hydroxymethyltransferase.